A 452-amino-acid polypeptide reads, in one-letter code: Pup--protein ligase (452 aa).

Residue Glu-9 participates in Mg(2+) binding. ATP is bound at residue Arg-53. Tyr-55 contributes to the Mg(2+) binding site. Residue Asp-57 is the Proton acceptor of the active site. Glu-63 is a binding site for Mg(2+). ATP is bound by residues Thr-66 and Trp-419.

This sequence belongs to the Pup ligase/Pup deamidase family. Pup-conjugating enzyme subfamily.

It carries out the reaction ATP + [prokaryotic ubiquitin-like protein]-L-glutamate + [protein]-L-lysine = ADP + phosphate + N(6)-([prokaryotic ubiquitin-like protein]-gamma-L-glutamyl)-[protein]-L-lysine.. Its pathway is protein degradation; proteasomal Pup-dependent pathway. It functions in the pathway protein modification; protein pupylation. Functionally, catalyzes the covalent attachment of the prokaryotic ubiquitin-like protein modifier Pup to the proteasomal substrate proteins, thereby targeting them for proteasomal degradation. This tagging system is termed pupylation. The ligation reaction involves the side-chain carboxylate of the C-terminal glutamate of Pup and the side-chain amino group of a substrate lysine. This is Pup--protein ligase from Rhodococcus jostii (strain RHA1).